Reading from the N-terminus, the 352-residue chain is Isoflavone-7-O-methyltransferase 6 (352 aa).

Substrate is bound at residue Val-118–Tyr-127. Residues Gly-196, Asp-219, Asp-239, Met-240, and Lys-253 each contribute to the S-adenosyl-L-methionine site. The active-site Proton acceptor is the His-257.

It belongs to the class I-like SAM-binding methyltransferase superfamily. Cation-independent O-methyltransferase family. COMT subfamily. In terms of assembly, homodimer.

It carries out the reaction a 7-hydroxyisoflavone + S-adenosyl-L-methionine = a 7-methoxyisoflavone + S-adenosyl-L-homocysteine + H(+). The protein operates within phytoalexin biosynthesis; medicarpin biosynthesis. Functionally, transfers a methyl group to 7-hydroxyls of the isoflavones daidzein, genistein and 6,7,4'-trihydroxyisoflavone. Can also methylate (+)6a-hydroxymaackiain with lower efficiency. This is Isoflavone-7-O-methyltransferase 6 from Medicago sativa (Alfalfa).